Consider the following 220-residue polypeptide: Putative pyrophosphatase PpaX (220 aa).

Catalysis depends on Asp-9, which acts as the Nucleophile.

It belongs to the HAD-like hydrolase superfamily. PpaX family. The cofactor is Mg(2+).

The catalysed reaction is diphosphate + H2O = 2 phosphate + H(+). This is Putative pyrophosphatase PpaX from Caldanaerobacter subterraneus subsp. tengcongensis (strain DSM 15242 / JCM 11007 / NBRC 100824 / MB4) (Thermoanaerobacter tengcongensis).